The chain runs to 339 residues: uncharacterized protein (339 aa).

This sequence to bacterial alkanal monooxygenase alpha and beta chains.

This is an uncharacterized protein from Bacillus subtilis (strain 168).